The sequence spans 646 residues: Exoribonuclease 2 (646 aa).

Residues 191–518 (RIDLTALDFV…NHRLLKAIIQ (328 aa)) form the RNB domain. One can recognise an S1 motif domain in the interval 563–645 (DKTFSAEIVD…ETRNIVARPV (83 aa)).

The protein belongs to the RNR ribonuclease family. RNase II subfamily.

It is found in the cytoplasm. The enzyme catalyses Exonucleolytic cleavage in the 3'- to 5'-direction to yield nucleoside 5'-phosphates.. Functionally, involved in mRNA degradation. Hydrolyzes single-stranded polyribonucleotides processively in the 3' to 5' direction. The chain is Exoribonuclease 2 from Xenorhabdus bovienii (strain SS-2004) (Xenorhabdus nematophila subsp. bovienii).